Consider the following 467-residue polypeptide: UDP-N-acetylmuramoylalanine--D-glutamate ligase (467 aa).

Residue 121 to 127 (GTNGKST) participates in ATP binding.

It belongs to the MurCDEF family.

The protein resides in the cytoplasm. The enzyme catalyses UDP-N-acetyl-alpha-D-muramoyl-L-alanine + D-glutamate + ATP = UDP-N-acetyl-alpha-D-muramoyl-L-alanyl-D-glutamate + ADP + phosphate + H(+). It functions in the pathway cell wall biogenesis; peptidoglycan biosynthesis. Cell wall formation. Catalyzes the addition of glutamate to the nucleotide precursor UDP-N-acetylmuramoyl-L-alanine (UMA). This chain is UDP-N-acetylmuramoylalanine--D-glutamate ligase, found in Chelativorans sp. (strain BNC1).